The following is a 1290-amino-acid chain: Sorbin and SH3 domain-containing protein 1 (1290 aa).

3 disordered regions span residues 1–211 (MSSE…LSDV), 238–271 (HKLN…SKSE), and 286–313 (TLPL…KKVD). The segment covering 45-61 (SSSYRGTPSSSPVSPQE) has biased composition (low complexity). Phosphothreonine is present on Thr51. A phosphoserine mark is found at Ser55, Ser58, and Ser62. Residues 62–71 (SPKHESKSGL) show a composition bias toward basic and acidic residues. Composition is skewed to polar residues over residues 83-95 (LSSS…NAQP) and 123-153 (EVSS…TIVN). Residues 161–173 (HNRDPASERRAGE) show a composition bias toward basic and acidic residues. A phosphoserine mark is found at Asp164 and Asp175. Residue Thr179 is modified to Phosphothreonine. 8 positions are modified to phosphoserine: Ser185, Ala194, Ser204, Ser209, Ser254, Ser261, Ser270, and Pro288. Positions 189–199 (ASERRAKDASR) are enriched in basic and acidic residues. Residues 202–247 (VRSAQDLSDVSTDEVGIPLRNTERSKDWYKTMFKQIHKLNRDDDSD) form the SoHo domain. Residues 240–260 (LNRDDDSDVHSPRYSFSDDTK) are compositionally biased toward basic and acidic residues. Basic and acidic residues predominate over residues 299–313 (SPERNDWEPLDKKVD). The residue at position 325 (Tyr325) is a Phosphotyrosine; by ABL1. 5 positions are modified to phosphoserine: Ser345, Pro346, Tyr357, Ser376, and Ser407. A disordered region spans residues 389–416 (VETVNKSPSANSPQSSAVSPTPDITSEP). A compositionally biased stretch (polar residues) spans 392–412 (VNKSPSANSPQSSAVSPTPDI). Tyr421 is subject to Phosphotyrosine; by ABL1. Ser432 and Ser470 each carry phosphoserine. 6 disordered regions span residues 463–482 (LSGL…RKGG), 588–607 (YDSK…SSRR), 697–739 (SLDF…EMDG), 783–803 (VSND…PKHR), 822–841 (RKHE…SRGD), and 862–972 (PLQQ…SPRH). The residue at position 475 (Thr475) is a Phosphothreonine. 2 stretches are compositionally biased toward polar residues: residues 595–606 (TMSLQEYGTSSR) and 704–722 (LSKS…SARS). The residue at position 969 (Ser969) is a Phosphoserine. 2 SH3 domains span residues 1049–1108 (LEMR…LLPP) and 1123–1184 (LEYG…VLKR). Thr1189 carries the post-translational modification Phosphothreonine. Tyr1193 and Tyr1198 each carry phosphotyrosine. A compositionally biased stretch (low complexity) spans 1198–1210 (YSSSPSRSATVSP). The interval 1198–1227 (YSSSPSRSATVSPQQPQAQQRRVTPDRSQP) is disordered. Phosphoserine is present on residues Ser1201 and Ser1209. Polar residues predominate over residues 1211–1227 (QQPQAQQRRVTPDRSQP). One can recognise an SH3 3 domain in the interval 1229 to 1290 (LDLCSYQALY…PGNYVKPLYL (62 aa)). The residue at position 1238 (Tyr1238) is a Phosphotyrosine; by ABL1.

Interacts (via SH3 domain 2) with PXN. Interacts with the long isoform of AFDN and with VCL. AFDN and VCL bind to SORBS1 in a competitive manner and do not form a ternary complex. Interacts with ABL1, CBL, CBLB and INPPL1/SHIP2 through the third SH3 domain. Interaction with ABL1 occurs only after insulin stimulation while this has no effect on the interaction with INPPL1. Interacts with the insulin receptor but dissociates from it following insulin stimulation. Also interacts with SCA7, PTK2/FAK1 and flotillin. Interacts (via third SH3 domain) with the Ten-1 ICD form of TENM1; the interaction induces the translocation of SORBS1 to the nucleus. Interacts with INSM1. In terms of processing, O-glycosylated. Expressed in all tissues tested: heart, brain, spleen, lung, liver, muscle, kidney and testis. Expressed in 3T3-L1 adipocytes but not in 3T3-L1 fibroblasts.

It is found in the cell junction. It localises to the adherens junction. The protein resides in the cell membrane. The protein localises to the cytoplasm. Its subcellular location is the cytoskeleton. It is found in the focal adhesion. It localises to the nucleus. The protein resides in the nucleus matrix. Its function is as follows. Plays a role in tyrosine phosphorylation of CBL by linking CBL to the insulin receptor. Required for insulin-stimulated glucose transport. Involved in formation of actin stress fibers and focal adhesions. This Mus musculus (Mouse) protein is Sorbin and SH3 domain-containing protein 1.